The primary structure comprises 262 residues: Phycoerythrobilin:ferredoxin oxidoreductase (262 aa).

This sequence belongs to the HY2 family.

The enzyme catalyses (3Z)-phycoerythrobilin + oxidized 2[4Fe-4S]-[ferredoxin] = 15,16-dihydrobiliverdin + reduced 2[4Fe-4S]-[ferredoxin] + 2 H(+). Its function is as follows. Catalyzes the two-electron reduction of the C2 and C3(1) diene system of 15,16-dihydrobiliverdin. The polypeptide is Phycoerythrobilin:ferredoxin oxidoreductase (pebB) (Parasynechococcus marenigrum (strain WH8102)).